Consider the following 80-residue polypeptide: uncharacterized protein (80 aa).

3 helical membrane-spanning segments follow: residues 2–22 (INLW…IGQV), 32–52 (FFGM…LTGG), and 55–75 (LVTG…RFMV).

Its subcellular location is the cell membrane. This is an uncharacterized protein from Escherichia coli (strain K12).